The chain runs to 366 residues: Beta sliding clamp (366 aa).

It belongs to the beta sliding clamp family. In terms of assembly, forms a ring-shaped head-to-tail homodimer around DNA which binds and tethers DNA polymerases and other proteins to the DNA. The DNA replisome complex has a single clamp-loading complex (3 tau and 1 each of delta, delta', psi and chi subunits) which binds 3 Pol III cores (1 core on the leading strand and 2 on the lagging strand) each with a beta sliding clamp dimer. Additional proteins in the replisome are other copies of gamma, psi and chi, Ssb, DNA helicase and RNA primase.

The protein resides in the cytoplasm. Its function is as follows. Confers DNA tethering and processivity to DNA polymerases and other proteins. Acts as a clamp, forming a ring around DNA (a reaction catalyzed by the clamp-loading complex) which diffuses in an ATP-independent manner freely and bidirectionally along dsDNA. Initially characterized for its ability to contact the catalytic subunit of DNA polymerase III (Pol III), a complex, multichain enzyme responsible for most of the replicative synthesis in bacteria; Pol III exhibits 3'-5' exonuclease proofreading activity. The beta chain is required for initiation of replication as well as for processivity of DNA replication. This is Beta sliding clamp (dnaN) from Vibrio cholerae serotype O1 (strain ATCC 39315 / El Tor Inaba N16961).